The following is a 119-amino-acid chain: Protein TusC (119 aa).

The protein belongs to the DsrF/TusC family. In terms of assembly, heterohexamer, formed by a dimer of trimers. The hexameric TusBCD complex contains 2 copies each of TusB, TusC and TusD. The TusBCD complex interacts with TusE.

The protein localises to the cytoplasm. In terms of biological role, part of a sulfur-relay system required for 2-thiolation of 5-methylaminomethyl-2-thiouridine (mnm(5)s(2)U) at tRNA wobble positions. This is Protein TusC from Shigella sonnei (strain Ss046).